Here is a 634-residue protein sequence, read N- to C-terminus: MKGIKKSPTEESLYLEYSHQTEGCIFPLHTSVTLFLLSYCECKVFNVCLVLTEESTDTSDTSFLKEALPQDLEIQVISKQALPPIVQNCCLPAVVDQPDVFCRAGLAVVLRHIIQKSYEAEPSRKEILELLGFKKTCLKACAEVSQWTRLCELTIPLAVENFLQESSEHPPTIPEEILELERKLSEPVRVHNDDKLRRQKLKQQKAAGSEPPSGKGKAKSKASAQKTPKDLAAPSKSLELKVAFSKLTVQEDAAASNREPSHIRKAKAADLPPLEHVFAEGLYFTLADIVLLPCIHHFLVIICKKFSEKLEQFPLLTSWYQRIQEVPKVKTAASKCGIYFLYLPELLNSARKQPVNSDEVAAVDEQSDPLFIGGPRPTMTKLMEKGIEAMFSPHPCPAWTLDWSSLPAAVSPKEGKMSTDRALRKQQQLNNLVYLVLNQAKPGDRIVDFCSGGGHVGIVLAHMLPSCQVTLIENKELSLIRAKKRSDELGLSNIWFIQANMEYFTGMFNIGVALHACGVATDMVIEHCIQTRASFITCPCCYGFIQNTSKFNFPKSEKFKKTLSYKEHMLLCRFADQTAVQLPPERRLIGKQCMGLVDLDRAAAAGEHGYSVQVISMEPESCSPKNNMIVGVPL.

A GST C-terminal domain is found at 131-333; it reads LGFKKTCLKA…QEVPKVKTAA (203 aa). Residues 189–233 form a disordered region; that stretch reads RVHNDDKLRRQKLKQQKAAGSEPPSGKGKAKSKASAQKTPKDLAA. The segment covering 204–226 has biased composition (low complexity); sequence QKAAGSEPPSGKGKAKSKASAQK.

The protein belongs to the GSTCD family.

Its subcellular location is the cytoplasm. This chain is Glutathione S-transferase C-terminal domain-containing protein (Gstcd), found in Mus musculus (Mouse).